The sequence spans 122 residues: Large ribosomal subunit protein bL12 (122 aa).

This sequence belongs to the bacterial ribosomal protein bL12 family. In terms of assembly, homodimer. Part of the ribosomal stalk of the 50S ribosomal subunit. Forms a multimeric L10(L12)X complex, where L10 forms an elongated spine to which 2 to 4 L12 dimers bind in a sequential fashion. Binds GTP-bound translation factors.

Functionally, forms part of the ribosomal stalk which helps the ribosome interact with GTP-bound translation factors. Is thus essential for accurate translation. The chain is Large ribosomal subunit protein bL12 from Pseudomonas aeruginosa (strain LESB58).